Reading from the N-terminus, the 234-residue chain is MEFSPPLQRATLIQRYKRFLADVITPDGRELTLHCPNTGAMTGCATPGDTVWYSTSDNTKRKYPHTWELTQSQSGAIICVNTLWANRLTKEAILNESISELAGYSSLKSEVKYGAERSRIDFMLQADSRPDCYIEVKSVTLAENEQGYFPDAVTERGQKHLRELMSVAAEGQRAVIFFAVLHSAITRFSPARHIDEKYAQLLSEAQQRGVEILAYKAELSAEGMALKKSLPVTL.

Residues leucine 201–serine 220 constitute a DNA-binding region (H-T-H motif).

It belongs to the SfsA family.

In terms of biological role, binds to DNA non-specifically. Could be a regulatory factor involved in maltose metabolism. This is Sugar fermentation stimulation protein A from Escherichia coli O127:H6 (strain E2348/69 / EPEC).